The primary structure comprises 106 residues: Pyrimidine/purine nucleoside phosphorylase (106 aa).

The protein belongs to the nucleoside phosphorylase PpnP family.

It catalyses the reaction a purine D-ribonucleoside + phosphate = a purine nucleobase + alpha-D-ribose 1-phosphate. It carries out the reaction adenosine + phosphate = alpha-D-ribose 1-phosphate + adenine. The enzyme catalyses cytidine + phosphate = cytosine + alpha-D-ribose 1-phosphate. The catalysed reaction is guanosine + phosphate = alpha-D-ribose 1-phosphate + guanine. It catalyses the reaction inosine + phosphate = alpha-D-ribose 1-phosphate + hypoxanthine. It carries out the reaction thymidine + phosphate = 2-deoxy-alpha-D-ribose 1-phosphate + thymine. The enzyme catalyses uridine + phosphate = alpha-D-ribose 1-phosphate + uracil. The catalysed reaction is xanthosine + phosphate = alpha-D-ribose 1-phosphate + xanthine. Catalyzes the phosphorolysis of diverse nucleosides, yielding D-ribose 1-phosphate and the respective free bases. Can use uridine, adenosine, guanosine, cytidine, thymidine, inosine and xanthosine as substrates. Also catalyzes the reverse reactions. The sequence is that of Pyrimidine/purine nucleoside phosphorylase from Paraburkholderia xenovorans (strain LB400).